We begin with the raw amino-acid sequence, 256 residues long: Undecaprenyl-diphosphatase (256 aa).

Transmembrane regions (helical) follow at residues 8-28 (VLGIVEGISEFLPISSTGHLI), 41-61 (FVKSFEISIQLGSILAVVVLY), 75-95 (IIAAFIPTGIIGFLLYKLIKG), 96-116 (FLIGNDLVVVVSLILGGIILI), 175-195 (AEFSFLLAIPTMFAATTYDLI), 208-228 (ILIIGFITSFITALIVVKWFL), and 236-256 (LKIFGFYRILIGLVYAAFFLF).

Belongs to the UppP family.

The protein resides in the cell inner membrane. The enzyme catalyses di-trans,octa-cis-undecaprenyl diphosphate + H2O = di-trans,octa-cis-undecaprenyl phosphate + phosphate + H(+). Its function is as follows. Catalyzes the dephosphorylation of undecaprenyl diphosphate (UPP). Confers resistance to bacitracin. This chain is Undecaprenyl-diphosphatase, found in Aquifex aeolicus (strain VF5).